The primary structure comprises 204 residues: Thymidylate kinase (204 aa).

Position 10 to 17 (10 to 17) interacts with ATP; the sequence is GGDGAGKT.

The protein belongs to the thymidylate kinase family.

It catalyses the reaction dTMP + ATP = dTDP + ADP. Its function is as follows. Phosphorylation of dTMP to form dTDP in both de novo and salvage pathways of dTTP synthesis. This chain is Thymidylate kinase, found in Cutibacterium acnes (strain DSM 16379 / KPA171202) (Propionibacterium acnes).